The sequence spans 427 residues: Zinc-finger homeodomain protein 7 (427 aa).

Disordered regions lie at residues 1-60 (MEYK…SLMD) and 91-118 (LHAAHHHGQGRRVEAPGGESQHHLQRHH). Residues 10 to 28 (EEEEEEEEEEDDEEEDEEE) are compositionally biased toward acidic residues. Residues 50 to 60 (SSASSPSSLMD) show a composition bias toward low complexity. The segment at 163 to 211 (YRECLKNHAARMGAHVLDGCGEFMSSPGDGAAALACAACGCHRSFHRRE) adopts a ZF-HD dimerization-type; degenerate zinc-finger fold. 2 disordered regions span residues 264 to 320 (KRPP…SKKR) and 375 to 427 (HLAK…QHDA). 2 stretches are compositionally biased toward low complexity: residues 271–283 (VSPASAPAALAES) and 301–312 (HAAAVVAASASA). Positions 318–381 (KKRFRTKFTA…NNKHLAKTPP (64 aa)) form a DNA-binding region, homeobox. The segment covering 380–401 (PPSPTSQPPPPPLHHDPSPPPP) has biased composition (pro residues). A compositionally biased stretch (basic residues) spans 402–416 (PHHHHHHHHHHHPPQ). Residues 417–427 (HHQQQQQQHDA) show a composition bias toward low complexity.

In terms of assembly, homo- and heterodimer with other ZFHD proteins.

Its subcellular location is the nucleus. Its function is as follows. Putative transcription factor. The sequence is that of Zinc-finger homeodomain protein 7 (ZHD7) from Oryza sativa subsp. japonica (Rice).